We begin with the raw amino-acid sequence, 665 residues long: MTNDVIRIVVCGDEGVGKSSLITSLIKDTYVPNIQKLLPPITIPKGFSSSPDAPLSTVIVDTQFSNSPAEAEHLHREIRQANVIWLVYSDHYSCERVSIFWLPYFRNLGVNLPIVLCANVFDDVDSWNSRDSERIISDEMIPILREFKEIESCIRVSAKLNHNINQAFYLCQKAVMHPIAPLFDAKEGKLKPNAVAALQRVFFLSDRDQDGYLSDQEMLELQVKCFGRSFDATDLIQIRAQLAKINPALATERGVSEEGFITLNRLYADKGRHETTWGILRTFHYTDYLSLSDQFLYPKLDVPENSSVELSPEGYRFLVDLFLLFDKDNDGGLNDSELKTLFKPTPGIPQKWLDFNFPYTTVHDEQGSITLQGWLALWSMTTFLDYKTTMAYLAYLGFEGDNSKKRFSGSSVTVAMTTAAAAAARLTAFKVTKPKKRRSRPRPYYRATPNDRSVFNCFVLGSHMSGKTSLLEAFLNRPLMTDIYKPTIRPVSVVNSVEMTGGKQCYMVMEELGQQEAAVLSNAARLEECDVICYTYDSSDPNSFSYIDGLRRKYPVLDTLPCVFVALKADNDRQQQRFDLQPDEYTKQIRIAAPLHVSSKWPSSVTELFIQLAEAAQQPGRGLPNQDPEEETNTIMPFALAGGATVLLAAAVAWIFKNVRVAGRE.

Residues 1 to 634 lie on the Cytoplasmic side of the membrane; it reads MTNDVIRIVV…NQDPEEETNT (634 aa). The 175-residue stretch at 3 to 177 folds into the Miro 1 domain; the sequence is NDVIRIVVCG…FYLCQKAVMH (175 aa). GTP is bound by residues 12–19, 61–67, and 119–122; these read GDEGVGKS, DTQFSNS, and NVFD. EF-hand domains lie at 193–228 and 313–348; these read NAVAALQRVFFLSDRDQDGYLSDQEMLELQVKCFGR and EGYRFLVDLFLLFDKDNDGGLNDSELKTLFKPTPGI. Ca(2+) contacts are provided by aspartate 206, aspartate 208, aspartate 210, tyrosine 212, glutamate 217, aspartate 326, aspartate 328, aspartate 330, and glutamate 337. The region spanning 452–618 is the Miro 2 domain; that stretch reads RSVFNCFVLG…FIQLAEAAQQ (167 aa). GTP contacts are provided by residues 461-468, 498-502, and 567-570; these read GSHMSGKT, EMTGG, and LKAD. The helical; Anchor for type IV membrane protein transmembrane segment at 635–655 threads the bilayer; the sequence is IMPFALAGGATVLLAAAVAWI. Residues 656 to 665 are Mitochondrial intermembrane-facing; that stretch reads FKNVRVAGRE.

The protein belongs to the mitochondrial Rho GTPase family.

The protein localises to the mitochondrion outer membrane. In terms of biological role, mitochondrial GTPase involved in mitochondrial trafficking. Probably involved in control of anterograde transport of mitochondria and their subcellular distribution. The sequence is that of Mitochondrial Rho GTPase 1 (GEM1) from Yarrowia lipolytica (strain CLIB 122 / E 150) (Yeast).